Reading from the N-terminus, the 213-residue chain is Nucleoside triphosphate pyrophosphatase (213 aa).

Catalysis depends on Asp-79, which acts as the Proton acceptor.

Belongs to the Maf family. A divalent metal cation serves as cofactor.

The protein localises to the cytoplasm. It catalyses the reaction a ribonucleoside 5'-triphosphate + H2O = a ribonucleoside 5'-phosphate + diphosphate + H(+). The enzyme catalyses a 2'-deoxyribonucleoside 5'-triphosphate + H2O = a 2'-deoxyribonucleoside 5'-phosphate + diphosphate + H(+). Nucleoside triphosphate pyrophosphatase. May have a dual role in cell division arrest and in preventing the incorporation of modified nucleotides into cellular nucleic acids. This chain is Nucleoside triphosphate pyrophosphatase, found in Rhodococcus erythropolis (strain PR4 / NBRC 100887).